The sequence spans 191 residues: Glycerol-3-phosphate acyltransferase (191 aa).

Helical transmembrane passes span 3-23, 51-71, 78-98, 108-128, and 150-170; these read YLIV…FILT, TLGY…VLYV, YIFI…WLKF, VGIL…SWAV, and YLIV…VLIF.

It belongs to the PlsY family. Probably interacts with PlsX.

It localises to the cell inner membrane. It catalyses the reaction an acyl phosphate + sn-glycerol 3-phosphate = a 1-acyl-sn-glycero-3-phosphate + phosphate. It functions in the pathway lipid metabolism; phospholipid metabolism. Its function is as follows. Catalyzes the transfer of an acyl group from acyl-phosphate (acyl-PO(4)) to glycerol-3-phosphate (G3P) to form lysophosphatidic acid (LPA). This enzyme utilizes acyl-phosphate as fatty acyl donor, but not acyl-CoA or acyl-ACP. In Pelagibacter ubique (strain HTCC1062), this protein is Glycerol-3-phosphate acyltransferase.